Here is a 673-residue protein sequence, read N- to C-terminus: DNA ligase (673 aa).

NAD(+)-binding positions include 38–42 (DSVYD), 87–88 (SL), and Glu119. The N6-AMP-lysine intermediate role is filled by Lys121. Residues Arg142, Glu179, Lys296, and Lys320 each coordinate NAD(+). Zn(2+)-binding residues include Cys414, Cys417, Cys432, and Cys438. Residues 595–673 (VVKSEIAGKT…EEAFLKLLKS (79 aa)) enclose the BRCT domain.

This sequence belongs to the NAD-dependent DNA ligase family. LigA subfamily. Mg(2+) is required as a cofactor. It depends on Mn(2+) as a cofactor.

It carries out the reaction NAD(+) + (deoxyribonucleotide)n-3'-hydroxyl + 5'-phospho-(deoxyribonucleotide)m = (deoxyribonucleotide)n+m + AMP + beta-nicotinamide D-nucleotide.. DNA ligase that catalyzes the formation of phosphodiester linkages between 5'-phosphoryl and 3'-hydroxyl groups in double-stranded DNA using NAD as a coenzyme and as the energy source for the reaction. It is essential for DNA replication and repair of damaged DNA. This Coxiella burnetii (strain RSA 493 / Nine Mile phase I) protein is DNA ligase.